We begin with the raw amino-acid sequence, 240 residues long: Purine nucleoside phosphorylase DeoD-type (240 aa).

H5 contributes to the a purine D-ribonucleoside binding site. Phosphate-binding positions include G21, R25, R44, and R88–S91. A purine D-ribonucleoside contacts are provided by residues E180–E182 and S204–D205. D205 acts as the Proton donor in catalysis.

Belongs to the PNP/UDP phosphorylase family. In terms of assembly, homohexamer; trimer of homodimers.

The enzyme catalyses a purine D-ribonucleoside + phosphate = a purine nucleobase + alpha-D-ribose 1-phosphate. It catalyses the reaction a purine 2'-deoxy-D-ribonucleoside + phosphate = a purine nucleobase + 2-deoxy-alpha-D-ribose 1-phosphate. Its function is as follows. Catalyzes the reversible phosphorolytic breakdown of the N-glycosidic bond in the beta-(deoxy)ribonucleoside molecules, with the formation of the corresponding free purine bases and pentose-1-phosphate. The chain is Purine nucleoside phosphorylase DeoD-type from Actinobacillus pleuropneumoniae serotype 5b (strain L20).